Reading from the N-terminus, the 191-residue chain is Calcium-activated potassium channel subunit beta-1 (191 aa).

Residues 1-15 lie on the Cytoplasmic side of the membrane; sequence MGKKLVMAQKRGETR. Residues 16-36 form a helical membrane-spanning segment; that stretch reads ALCLGVAMVMCAVIAYYILGT. Residues 37 to 157 are Extracellular-facing; the sequence is TMLPLYQKSV…YRRLYGPQTL (121 aa). Asn-80 and Asn-142 each carry an N-linked (GlcNAc...) asparagine glycan. The chain crosses the membrane as a helical span at residues 158 to 178; the sequence is LFSLFWPTFLLTGGLLIIAMV. At 179–191 the chain is on the cytoplasmic side; sequence KINQSLSILAAQR.

The protein belongs to the KCNMB (TC 8.A.14.1) family. KCNMB1 subfamily. As to quaternary structure, interacts with KCNMA1 tetramer. There are probably 4 molecules of KCMNB1 per KCNMA1 tetramer. N-glycosylated.

The protein localises to the membrane. In terms of biological role, regulatory subunit of the calcium activated potassium KCNMA1 (maxiK) channel. Modulates the calcium sensitivity and gating kinetics of KCNMA1, thereby contributing to KCNMA1 channel diversity. Increases the apparent Ca(2+)/voltage sensitivity of the KCNMA1 channel. It also modifies KCNMA1 channel kinetics and alters its pharmacological properties. It slows down the activation and the deactivation kinetics of the channel. Acts as a negative regulator of smooth muscle contraction by enhancing the calcium sensitivity to KCNMA1. Its presence is also a requirement for internal binding of the KCNMA1 channel opener dehydrosoyasaponin I (DHS-1) triterpene glycoside and for external binding of the agonist hormone 17-beta-estradiol (E2). Increases the binding activity of charybdotoxin (CTX) toxin to KCNMA1 peptide blocker by increasing the CTX association rate and decreasing the dissociation rate. This chain is Calcium-activated potassium channel subunit beta-1 (KCNMB1), found in Canis lupus familiaris (Dog).